A 429-amino-acid chain; its full sequence is MQSARRHLNTIFILDFGSQYTYVLAKQVRKLFVYCEVLPWNISVQCLKERAPLGIILSGGPHSVYENKAPHLDPEIYKLGIPILAICYGMQLMARDFGGTVSPGVGEFGYTPIHLYPCELFKHIVDCESLDTEIRMSHRDHVTTIPEGFNVIASTSQCSISGIENTKQRLYGLQFHPEVSDSTPTGNKILETFVQEICSAPTLWNPLYIQQDLVSKIQDTVIEVFDEVAQSLDVQWLAQGTIYSDVIESSRSGHASEVIKSHHNVGGLPKNLKLKLVEPLRYLFKDEVRILGEALGLSSYLLDRHPFPGPGLTIRVIGEILPEYLAILRRADLIFIEELRKAKLYDKISQAFALFLPIKSVSVKGDCRSYGYTIALRAVESTDFMTGRWAYLPCDVLSSCSSRIINEIPEVSRVVYDISDKPPATIEWE.

A Glutamine amidotransferase type-1 domain is found at 10–118 (TIFILDFGSQ…GYTPIHLYPC (109 aa)). The active-site Nucleophile is the C87. A GMPS ATP-PPase domain is found at 119-304 (ELFKHIVDCE…LGLSSYLLDR (186 aa)). Catalysis depends on residues H176 and E178.

Homodimer.

It catalyses the reaction XMP + L-glutamine + ATP + H2O = GMP + L-glutamate + AMP + diphosphate + 2 H(+). It functions in the pathway purine metabolism; GMP biosynthesis; GMP from XMP (L-Gln route): step 1/1. In terms of biological role, catalyzes the synthesis of GMP from XMP. The polypeptide is Putative GMP synthase [glutamine-hydrolyzing] (guaA) (Chlamydia pneumoniae (Chlamydophila pneumoniae)).